We begin with the raw amino-acid sequence, 241 residues long: Octanoyltransferase (241 aa).

Positions Gly-49–Glu-233 constitute a BPL/LPL catalytic domain. Residues Arg-87–His-94, Ala-162–Gly-164, and Gly-175–Ser-177 each bind substrate. Cys-193 acts as the Acyl-thioester intermediate in catalysis.

The protein belongs to the LipB family.

The protein localises to the cytoplasm. It catalyses the reaction octanoyl-[ACP] + L-lysyl-[protein] = N(6)-octanoyl-L-lysyl-[protein] + holo-[ACP] + H(+). Its pathway is protein modification; protein lipoylation via endogenous pathway; protein N(6)-(lipoyl)lysine from octanoyl-[acyl-carrier-protein]: step 1/2. Functionally, catalyzes the transfer of endogenously produced octanoic acid from octanoyl-acyl-carrier-protein onto the lipoyl domains of lipoate-dependent enzymes. Lipoyl-ACP can also act as a substrate although octanoyl-ACP is likely to be the physiological substrate. The chain is Octanoyltransferase from Nitrobacter hamburgensis (strain DSM 10229 / NCIMB 13809 / X14).